Here is a 312-residue protein sequence, read N- to C-terminus: MNKNKSNKLKGIVVALKANFLIVEIDHKNFKDHSFDQFYGKIRLLCIRRSKLNYQGLFIDVGDIVCVESIDYKNKRAVVSDVEPRQSFLKRPAVANVTLVSICISADEPLFDMEQTSRFLLTAECANIEPLIILTKIDLITKNDLILYINKFKSWGYDCIPVSIHNSQGIDSLIERLRKTKLTVLAGPSGVGKTSLINHLIPTVSLPTSSVSKKLKRGTHTTRHVELFAIGNGSLLADTPGFNRPEIVCEPSDFAFLFPEFRTQLSNSQCKFRNCLHRDEPGCVIDKDLERYPFYRQNLEEMINSPLPYQAG.

The CP-type G domain maps to 86–245 (QSFLKRPAVA…LADTPGFNRP (160 aa)). GTP-binding positions include 135–138 (TKID) and 187–195 (GPSGVGKTS). Positions 270, 275, 277, and 283 each coordinate Zn(2+).

It belongs to the TRAFAC class YlqF/YawG GTPase family. RsgA subfamily. In terms of assembly, monomer. Associates with 30S ribosomal subunit, binds 16S rRNA. Requires Zn(2+) as cofactor.

The protein resides in the cytoplasm. Functionally, one of several proteins that assist in the late maturation steps of the functional core of the 30S ribosomal subunit. Helps release RbfA from mature subunits. May play a role in the assembly of ribosomal proteins into the subunit. Circularly permuted GTPase that catalyzes slow GTP hydrolysis, GTPase activity is stimulated by the 30S ribosomal subunit. The sequence is that of Small ribosomal subunit biogenesis GTPase RsgA from Prochlorococcus marinus (strain NATL2A).